The primary structure comprises 646 residues: Glutamine--tRNA ligase protein virJ (646 aa).

Residues 25–65 (NELKKRIQKRARKAAAAANRSNAQQEKGNKPAANKPAAKPE) form a disordered region. Residues 38–61 (AAAAANRSNAQQEKGNKPAANKPA) show a composition bias toward low complexity. The short motif at 98-108 (PEPNGYLHLGH) is the 'HIGH' region element. ATP-binding positions include 99-101 (EPN) and 105-111 (HLGHAKA). 2 residues coordinate L-glutamine: Asp147 and Tyr296. Residues Thr315, 344–345 (RL), and 352–354 (MSK) contribute to the ATP site. Positions 351–355 (IMSKR) match the 'KMSKS' region motif.

The protein belongs to the class-I aminoacyl-tRNA synthetase family.

It carries out the reaction tRNA(Gln) + L-glutamine + ATP = L-glutaminyl-tRNA(Gln) + AMP + diphosphate. Functionally, glutamine--tRNA ligase; part of the gene cluster that mediates the biosynthesis of virensols and trichoxide, fungal natural products that contain or are derived from a salicylaldehyde core. VirJ does not seem to play any role in virensols and trichoxide biosynthesis. This is Glutamine--tRNA ligase protein virJ from Hypocrea virens (strain Gv29-8 / FGSC 10586) (Gliocladium virens).